Here is a 141-residue protein sequence, read N- to C-terminus: Putative phosphatidylglycerol/phosphatidylinositol transfer protein DDB_G0278295 (141 aa).

A signal peptide spans 1–19 (MRLLLALFFVLALVSPSFT). Asn-82 and Asn-104 each carry an N-linked (GlcNAc...) asparagine glycan.

The protein belongs to the NPC2 family. As to quaternary structure, monomer.

Its function is as follows. Catalyzes the intermembrane transfer of phosphatidylglycerol and phosphatidylinositol. This chain is Putative phosphatidylglycerol/phosphatidylinositol transfer protein DDB_G0278295, found in Dictyostelium discoideum (Social amoeba).